Reading from the N-terminus, the 113-residue chain is Hydrogenase maturation factor HybF (113 aa).

Residues His-2 and Glu-3 each contribute to the Ni(2+) site. Cys-73, Cys-76, Cys-89, and Cys-92 together coordinate Zn(2+).

It belongs to the HypA/HybF family. HybF subfamily.

Involved in the maturation of [NiFe] hydrogenases. Required for nickel insertion into the metal center of the hydrogenase. The polypeptide is Hydrogenase maturation factor HybF (Morganella morganii (Proteus morganii)).